The sequence spans 179 residues: Large ribosomal subunit protein uL5 (179 aa).

This sequence belongs to the universal ribosomal protein uL5 family. As to quaternary structure, part of the 50S ribosomal subunit; part of the 5S rRNA/L5/L18/L25 subcomplex. Contacts the 5S rRNA and the P site tRNA. Forms a bridge to the 30S subunit in the 70S ribosome.

Functionally, this is one of the proteins that bind and probably mediate the attachment of the 5S RNA into the large ribosomal subunit, where it forms part of the central protuberance. In the 70S ribosome it contacts protein S13 of the 30S subunit (bridge B1b), connecting the 2 subunits; this bridge is implicated in subunit movement. Contacts the P site tRNA; the 5S rRNA and some of its associated proteins might help stabilize positioning of ribosome-bound tRNAs. This chain is Large ribosomal subunit protein uL5, found in Prochlorococcus marinus (strain SARG / CCMP1375 / SS120).